The chain runs to 191 residues: Glutathione S-transferase Y-2 (191 aa).

The region spanning 2 to 80 is the GST N-terminal domain; sequence TFATVYIKPH…YIVAKGSKPE (79 aa). The 107-residue stretch at 85-191 folds into the GST C-terminal domain; that stretch reads TTEERATNTR…VSQHPIIKNM (107 aa).

This sequence belongs to the GST superfamily.

The enzyme catalyses RX + glutathione = an S-substituted glutathione + a halide anion + H(+). Its function is as follows. Conjugation of reduced glutathione to a wide number of exogenous and endogenous hydrophobic electrophiles. This Pichia kudriavzevii (Yeast) protein is Glutathione S-transferase Y-2 (GSTY2).